Here is a 747-residue protein sequence, read N- to C-terminus: Plakophilin-1 (747 aa).

The interval M1–K234 is required for binding to single stranded DNA. The interval M1–L286 is required for interaction with EIF4A1. Residue S4 is modified to Phosphoserine. Residues T48 to G68 are disordered. 2 phosphorylation in this region is required for cytoplasmic localization and protein stabilization regions span residues S54–S69 and R116–S191. Phosphoserine; by PKB/AKT2 is present on S118. S119, S121, and S142 each carry phosphoserine. The segment at Y160 to I269 is required for WNT-mediated nuclear localization. 9 ARM repeats span residues S243–F274, Q275–F316, R317–S359, T360–G415, M416–A463, N525–M556, G557–L603, L604–G649, and N650–S713.

This sequence belongs to the beta-catenin family. In terms of assembly, part of a complex that contains DSG3, PKP1, YAP1 and YWHAG; the complex is required for localization of DSG3 and YAP1 to the cell membrane in keratinocytes. Interacts with DSP. Interacts (via N-terminus) with KRT5/CK5, KRT8/CK8 (via rod domain), KRT15/CK15 and KRT18/CK18 (via rod domain) as part of intermediate filaments. Interacts with VIM (via rod domain). Interacts with DSP. Interacts with DES. Interacts with FXR1; the interaction may facilitate the binding of PKP1 to PKP2, PKP3 and DSP mRNA. Interacts (via N-terminus) with EIF4A1; the interaction promotes EIF4A1 recruitment to the cap-dependent translation complex and EIF4A1 ATPase activity. Interacts with TJP1/ZO-1; the interaction facilitates TJP1/ZO-1 localization to the plasma membrane. Interacts (when phosphorylated) with YWHAG; the interaction results in translocation of PKP1 to the cytoplasm and loss of intercellular adhesion in keratinocytes. In terms of processing, phosphorylated by AKT2; required for interaction with YWHAG and subsequent localization away from desmosomes to the cytoplasm. Phosphorylation of Ser-118 by AKT2 promotes PKP1-driven cap-dependent mRNA translation and decreases intercellular adhesion, phosphorylation is promoted by insulin. Phosphorylation by RIPK4 at the N-terminus is required for its role in differentiation of keratinocytes and DSG1 localization at cell junctions. Expressed in stratified squamous, complex, glandular duct and bladder epithelia (at protein level). As to expression, widely expressed (at protein level).

It is found in the cell junction. The protein localises to the desmosome. The protein resides in the nucleus. Its subcellular location is the cytoplasm. It localises to the perinuclear region. It is found in the cell membrane. The protein localises to the stress granule. Its function is as follows. A component of desmosome cell-cell junctions which are required for positive regulation of cellular adhesion. Plays a role in desmosome protein expression regulation and localization to the desmosomal plaque, thereby maintaining cell sheet integrity and anchorage of desmosomes to intermediate filaments. Required for localization of DSG3 and YAP1 to the cell membrane in keratinocytes in response to mechanical strain, via the formation of an interaction complex composed of DSG3, YAP1, PKP1 and YWHAG. Positively regulates differentiation of keratinocytes, potentially via promoting localization of DSG1 at desmosome cell junctions. Required for calcium-independent development and maturation of desmosome plaques specifically at lateral cell-cell contacts in differentiating keratinocytes. Plays a role in the maintenance of DSG3 protein abundance, DSG3 clustering and localization of these clusters to the cell membrane in keratinocytes. May also promote keratinocyte proliferation and morphogenesis during postnatal development. Required for tight junction inside-out transepidermal barrier function of the skin. Promotes Wnt-mediated proliferation and differentiation of ameloblasts, via facilitating TJP1/ZO-1 localization to tight junctions. Binds single-stranded DNA (ssDNA), and may thereby play a role in sensing DNA damage and promoting cell survival. Positively regulates cap-dependent translation and as a result cell proliferation, via recruitment of EIF4A1 to the initiation complex and promotion of EIF4A1 ATPase activity. Regulates the mRNA stability and protein abundance of desmosome components PKP2, PKP3, DSC2 and DSP, potentially via its interaction with FXR1. The protein is Plakophilin-1 (PKP1) of Homo sapiens (Human).